The chain runs to 110 residues: U1-lycotoxin-Ls1bb (110 aa).

The first 20 residues, 1–20 (MKFVLLFGVLLVTLFSYSSA), serve as a signal peptide directing secretion. A propeptide spanning residues 21–44 (EMLDDFDQADEDELLSLIEKEEAR) is cleaved from the precursor. Cystine bridges form between cysteine 47/cysteine 62, cysteine 54/cysteine 71, cysteine 61/cysteine 89, and cysteine 73/cysteine 87.

Belongs to the neurotoxin 19 (CSTX) family. 03 subfamily. Expressed by the venom gland.

The protein localises to the secreted. The protein is U1-lycotoxin-Ls1bb of Lycosa singoriensis (Wolf spider).